Reading from the N-terminus, the 322-residue chain is Beta-1,3-galactosyltransferase bre-5 (322 aa).

At 1 to 16 (MFLCVRILKRKYHELS) the chain is on the cytoplasmic side. A helical; Signal-anchor for type II membrane protein membrane pass occupies residues 17–37 (SFQKLLIFTITIFLLWVLGVV). The Lumenal segment spans residues 38–322 (DKFRETSFGD…YEYSQLNGFE (285 aa)). N150 carries N-linked (GlcNAc...) asparagine glycosylation.

Belongs to the glycosyltransferase 31 family. As to expression, expressed in the gut.

Its subcellular location is the golgi apparatus membrane. It participates in protein modification; protein glycosylation. Its function is as follows. Transfers N-acetylgalactosamine onto mannose groups of carbohydrate substrates. Required for susceptibility to pore-forming crystal toxins in conjunction with bre-1, bre-2, bre-3, and bre-4. Involved in resistance to the nematotoxic C.cinerea galectin Cgl2. The sequence is that of Beta-1,3-galactosyltransferase bre-5 from Caenorhabditis elegans.